A 362-amino-acid polypeptide reads, in one-letter code: Chorismate synthase (362 aa).

Arginine 46 is an NADP(+) binding site. FMN contacts are provided by residues 122–124 (RSS), 238–239 (NA), glycine 278, 293–297 (KPTPS), and arginine 319.

The protein belongs to the chorismate synthase family. As to quaternary structure, homotetramer. Requires FMNH2 as cofactor.

It carries out the reaction 5-O-(1-carboxyvinyl)-3-phosphoshikimate = chorismate + phosphate. It functions in the pathway metabolic intermediate biosynthesis; chorismate biosynthesis; chorismate from D-erythrose 4-phosphate and phosphoenolpyruvate: step 7/7. Catalyzes the anti-1,4-elimination of the C-3 phosphate and the C-6 proR hydrogen from 5-enolpyruvylshikimate-3-phosphate (EPSP) to yield chorismate, which is the branch point compound that serves as the starting substrate for the three terminal pathways of aromatic amino acid biosynthesis. This reaction introduces a second double bond into the aromatic ring system. The sequence is that of Chorismate synthase from Campylobacter jejuni subsp. jejuni serotype O:2 (strain ATCC 700819 / NCTC 11168).